The following is a 376-amino-acid chain: Queuine tRNA-ribosyltransferase (376 aa).

Catalysis depends on Asp93, which acts as the Proton acceptor. Substrate is bound by residues 93-97 (DSGGF), Asp147, Gln190, and Gly217. The RNA binding stretch occupies residues 248–254 (GVGKPDD). Residue Asp267 is the Nucleophile of the active site. Residues Cys305, Cys307, Cys310, and His336 each coordinate Zn(2+).

The protein belongs to the queuine tRNA-ribosyltransferase family. Homodimer. Within each dimer, one monomer is responsible for RNA recognition and catalysis, while the other monomer binds to the replacement base PreQ1. It depends on Zn(2+) as a cofactor.

The enzyme catalyses 7-aminomethyl-7-carbaguanine + guanosine(34) in tRNA = 7-aminomethyl-7-carbaguanosine(34) in tRNA + guanine. Its pathway is tRNA modification; tRNA-queuosine biosynthesis. In terms of biological role, catalyzes the base-exchange of a guanine (G) residue with the queuine precursor 7-aminomethyl-7-deazaguanine (PreQ1) at position 34 (anticodon wobble position) in tRNAs with GU(N) anticodons (tRNA-Asp, -Asn, -His and -Tyr). Catalysis occurs through a double-displacement mechanism. The nucleophile active site attacks the C1' of nucleotide 34 to detach the guanine base from the RNA, forming a covalent enzyme-RNA intermediate. The proton acceptor active site deprotonates the incoming PreQ1, allowing a nucleophilic attack on the C1' of the ribose to form the product. After dissociation, two additional enzymatic reactions on the tRNA convert PreQ1 to queuine (Q), resulting in the hypermodified nucleoside queuosine (7-(((4,5-cis-dihydroxy-2-cyclopenten-1-yl)amino)methyl)-7-deazaguanosine). This is Queuine tRNA-ribosyltransferase from Jannaschia sp. (strain CCS1).